A 435-amino-acid chain; its full sequence is Tol-Pal system protein TolB (435 aa).

The signal sequence occupies residues 1–28 (MTKCSFFRAILVAVGLMTAAVFATPANA). A disordered region spans residues 288–310 (STAAIDTSPSYSPDGARVSFESD).

Belongs to the TolB family. In terms of assembly, the Tol-Pal system is composed of five core proteins: the inner membrane proteins TolA, TolQ and TolR, the periplasmic protein TolB and the outer membrane protein Pal. They form a network linking the inner and outer membranes and the peptidoglycan layer.

The protein resides in the periplasm. In terms of biological role, part of the Tol-Pal system, which plays a role in outer membrane invagination during cell division and is important for maintaining outer membrane integrity. This chain is Tol-Pal system protein TolB, found in Rhizobium johnstonii (strain DSM 114642 / LMG 32736 / 3841) (Rhizobium leguminosarum bv. viciae).